Here is a 638-residue protein sequence, read N- to C-terminus: Sorting nexin-41 (638 aa).

Residues 1 to 14 show a composition bias toward low complexity; that stretch reads MDSDTSPNPFASSP. The interval 1 to 69 is disordered; the sequence is MDSDTSPNPF…MGATVPGPKP (69 aa). The segment covering 15–30 has biased composition (pro residues); it reads PSSPSPRPSLPPPVPR. The region spanning 84-201 is the PX domain; it reads GEQVHIVDAL…HRFLEEDVSW (118 aa). A 1,2-diacyl-sn-glycero-3-phospho-(1D-myo-inositol-3-phosphate) contacts are provided by arginine 118, serine 120, lysine 144, and arginine 168. Disordered regions lie at residues 215–239, 408–432, and 545–638; these read KNPLHAPSHNPTFQPTTPTSPSEAP, LERGGSVLASPQLEPEAARDERERA, and PHPN…LGPL. Low complexity predominate over residues 225–239; sequence PTFQPTTPTSPSEAP. A compositionally biased stretch (basic and acidic residues) spans 423–432; it reads EAARDERERA. The segment covering 552–562 has biased composition (low complexity); sequence QTQTQVQSQQS. Over residues 585 to 601 the composition is skewed to basic and acidic residues; sequence MKNEIERVEIEIADKPL.

Belongs to the sorting nexin family.

Its subcellular location is the endosome membrane. It localises to the endomembrane system. Its function is as follows. May be required for cytoplasm to vacuole transport (Cvt) and pexophagy. This is Sorting nexin-41 (SNX41) from Cryptococcus neoformans var. neoformans serotype D (strain JEC21 / ATCC MYA-565) (Filobasidiella neoformans).